Here is a 124-residue protein sequence, read N- to C-terminus: Small ribosomal subunit protein uS13 (124 aa).

The segment at 95 to 124 (GLPVRGQRTKTNARTRKGPKRTVAGKKKAR) is disordered.

This sequence belongs to the universal ribosomal protein uS13 family. Part of the 30S ribosomal subunit. Forms a loose heterodimer with protein S19. Forms two bridges to the 50S subunit in the 70S ribosome.

Located at the top of the head of the 30S subunit, it contacts several helices of the 16S rRNA. In the 70S ribosome it contacts the 23S rRNA (bridge B1a) and protein L5 of the 50S subunit (bridge B1b), connecting the 2 subunits; these bridges are implicated in subunit movement. Contacts the tRNAs in the A and P-sites. This chain is Small ribosomal subunit protein uS13, found in Leifsonia xyli subsp. xyli (strain CTCB07).